Reading from the N-terminus, the 293-residue chain is Elongation factor Ts (293 aa).

The interval 80–83 (TDFV) is involved in Mg(2+) ion dislocation from EF-Tu.

It belongs to the EF-Ts family.

The protein localises to the cytoplasm. Functionally, associates with the EF-Tu.GDP complex and induces the exchange of GDP to GTP. It remains bound to the aminoacyl-tRNA.EF-Tu.GTP complex up to the GTP hydrolysis stage on the ribosome. This chain is Elongation factor Ts, found in Enterococcus faecalis (strain ATCC 700802 / V583).